The sequence spans 130 residues: Small ribosomal subunit protein uS9 (130 aa).

This sequence belongs to the universal ribosomal protein uS9 family.

The polypeptide is Small ribosomal subunit protein uS9 (Xanthomonas campestris pv. campestris (strain 8004)).